A 110-amino-acid chain; its full sequence is Large ribosomal subunit protein uL22 (110 aa).

It belongs to the universal ribosomal protein uL22 family. As to quaternary structure, part of the 50S ribosomal subunit.

Its function is as follows. This protein binds specifically to 23S rRNA; its binding is stimulated by other ribosomal proteins, e.g. L4, L17, and L20. It is important during the early stages of 50S assembly. It makes multiple contacts with different domains of the 23S rRNA in the assembled 50S subunit and ribosome. Functionally, the globular domain of the protein is located near the polypeptide exit tunnel on the outside of the subunit, while an extended beta-hairpin is found that lines the wall of the exit tunnel in the center of the 70S ribosome. The chain is Large ribosomal subunit protein uL22 from Geobacter metallireducens (strain ATCC 53774 / DSM 7210 / GS-15).